Here is a 676-residue protein sequence, read N- to C-terminus: Probable ERAD-associated E3 ubiquitin-protein ligase ASI1 (676 aa).

Residues 1 to 78 (MSTNILQHVK…TLQLAKVGIR (78 aa)) lie on the Perinuclear space side of the membrane. N24, N34, N46, and N66 each carry an N-linked (GlcNAc...) asparagine glycan. A helical membrane pass occupies residues 79 to 99 (MFFSYSVSKYAVLCFSTAIIL). Residues 100–126 (NRLTVMSSLRSNSTNIRLPLWSKTLLH) are Nuclear-facing. Residues 127 to 147 (LVATLSLVKALLQILSQFGLM) form a helical membrane-spanning segment. Residues 148–156 (HELHVSDTD) are Perinuclear space-facing. The helical transmembrane segment at 157 to 177 (FYALSVYLFVALSDCIEIFIS) threads the bilayer. Residues 178–181 (STTN) are Nuclear-facing. A helical membrane pass occupies residues 182–202 (VPSLICSDFSIWGLSLNLYII). The Perinuclear space portion of the chain corresponds to 203-277 (SKMPAGQQHI…NICLIHNYFP (75 aa)). The chain crosses the membrane as a helical span at residues 278-298 (GFFYISTILLASIGIFLKALF). Residues 299–676 (TSNPFRSLYS…VKGYSKLNIV (378 aa)) are Nuclear-facing. The RING-type; atypical zinc finger occupies 624-664 (CLICKVNKRNIVTWPCRCLALCDDCRISLGYKGFATCVSCD).

As to quaternary structure, component of the Asi complex, which contains ASI1, ASI2 and ASI3. Interacts directly with ASI1.

It localises to the nucleus inner membrane. The enzyme catalyses S-ubiquitinyl-[E2 ubiquitin-conjugating enzyme]-L-cysteine + [acceptor protein]-L-lysine = [E2 ubiquitin-conjugating enzyme]-L-cysteine + N(6)-ubiquitinyl-[acceptor protein]-L-lysine.. Functionally, part of the nuclear inner membrane (INM)-specific branch of the ER-associated degradation (ERAD) pathway, required for the elimination of misfolded proteins in the INM, a specialized ER subdomain. Required for ERG11 degradation. Negative regulator of SPS-sensor signaling. Together with ASI2 and ASI3, prevents the unprocessed precursor forms of STP1 and STP2 that escape cytoplasmic anchoring from inducing SPS-sensor-regulated genes in the absence of inducing signals. Controls amino acid permease (AAP) gene expression in response to amino acid availability, a process mediated by the transcription factors STP1 and STP1. The chain is Probable ERAD-associated E3 ubiquitin-protein ligase ASI1 (ASI3) from Saccharomyces cerevisiae (strain ATCC 204508 / S288c) (Baker's yeast).